A 37-amino-acid chain; its full sequence is Cytochrome b6-f complex subunit 5 (37 aa).

Residues 5 to 25 form a helical membrane-spanning segment; it reads LLSGIVLGMIPITLAGLFVTA.

Belongs to the PetG family. The 4 large subunits of the cytochrome b6-f complex are cytochrome b6, subunit IV (17 kDa polypeptide, PetD), cytochrome f and the Rieske protein, while the 4 small subunits are PetG, PetL, PetM and PetN. The complex functions as a dimer.

It localises to the plastid. It is found in the chloroplast thylakoid membrane. In terms of biological role, component of the cytochrome b6-f complex, which mediates electron transfer between photosystem II (PSII) and photosystem I (PSI), cyclic electron flow around PSI, and state transitions. PetG is required for either the stability or assembly of the cytochrome b6-f complex. In Mesostigma viride (Green alga), this protein is Cytochrome b6-f complex subunit 5.